Here is a 134-residue protein sequence, read N- to C-terminus: Profilin-2 (134 aa).

C13 and C118 are disulfide-bonded. Positions 84–100 match the Involved in PIP2 interaction motif; that stretch reads AVIRGKKGSGGITIKKT. Phosphothreonine is present on T114.

It belongs to the profilin family. Occurs in many kinds of cells as a complex with monomeric actin in a 1:1 ratio. Phosphorylated by MAP kinases.

It localises to the cytoplasm. The protein resides in the cytoskeleton. Binds to actin and affects the structure of the cytoskeleton. At high concentrations, profilin prevents the polymerization of actin, whereas it enhances it at low concentrations. The polypeptide is Profilin-2 (Olea europaea (Common olive)).